We begin with the raw amino-acid sequence, 64 residues long: Prokaryotic ubiquitin-like protein Pup (64 aa).

Positions 20 to 58 (QELTLAASHVVSDVSEVDDLLDEIDGLLAENAEDFVTGF) are ARC ATPase binding. Glu-64 participates in a covalent cross-link: Isoglutamyl lysine isopeptide (Glu-Lys) (interchain with K-? in acceptor proteins).

It belongs to the prokaryotic ubiquitin-like protein family. As to quaternary structure, strongly interacts with the proteasome-associated ATPase ARC through a hydrophobic interface; the interacting region of Pup lies in its C-terminal half. There is one Pup binding site per ARC hexamer ring.

The protein operates within protein degradation; proteasomal Pup-dependent pathway. Protein modifier that is covalently attached to lysine residues of substrate proteins, thereby targeting them for proteasomal degradation. The tagging system is termed pupylation. The chain is Prokaryotic ubiquitin-like protein Pup from Rothia mucilaginosa (strain DY-18) (Stomatococcus mucilaginosus).